Reading from the N-terminus, the 193-residue chain is MRLCDRDIEAWLDEGRLSITPRPPVERINGATVDVRLGNKFRTFRGHTAAFIDLSGPKDEVSAALDRVMSDEIVLPDGEAFYLHPGELALAVTFESVTLPPDLVGWLDGRSSLARLGLMVHVTAHRIDPGWSGCIVLEFYNSGKLPLALRPGMLIGALSFEPLSGPAARPYNRRQDAKYRDQQGAVASRIDKD.

Residues R110–R115, D128, V136–E138, Y171, K178, and Q182 contribute to the dCTP site. E138 functions as the Proton donor/acceptor in the catalytic mechanism. Positions R169 to D193 are disordered.

The protein belongs to the dCTP deaminase family. As to quaternary structure, homotrimer.

It catalyses the reaction dCTP + H2O + H(+) = dUTP + NH4(+). Its pathway is pyrimidine metabolism; dUMP biosynthesis; dUMP from dCTP (dUTP route): step 1/2. In terms of biological role, catalyzes the deamination of dCTP to dUTP. In Salmonella paratyphi B (strain ATCC BAA-1250 / SPB7), this protein is dCTP deaminase.